Reading from the N-terminus, the 374-residue chain is Ribosomal RNA large subunit methyltransferase G (374 aa).

The protein belongs to the methyltransferase superfamily. RlmG family.

The protein resides in the cytoplasm. The enzyme catalyses guanosine(1835) in 23S rRNA + S-adenosyl-L-methionine = N(2)-methylguanosine(1835) in 23S rRNA + S-adenosyl-L-homocysteine + H(+). Functionally, specifically methylates the guanine in position 1835 (m2G1835) of 23S rRNA. This chain is Ribosomal RNA large subunit methyltransferase G, found in Photobacterium profundum (strain SS9).